Here is a 359-residue protein sequence, read N- to C-terminus: Probable deacetylase AF_0130 (359 aa).

Catalysis depends on His-126, which acts as the Proton donor/acceptor. Zn(2+) contacts are provided by Asp-162, His-164, and Asp-249.

Belongs to the histone deacetylase family. The cofactor is Zn(2+).

Functionally, probable deacetylase. The chain is Probable deacetylase AF_0130 from Archaeoglobus fulgidus (strain ATCC 49558 / DSM 4304 / JCM 9628 / NBRC 100126 / VC-16).